The sequence spans 116 residues: NADH dehydrogenase [ubiquinone] 1 alpha subcomplex subunit 5 (116 aa).

A2 bears the N-acetylalanine mark. N6-acetyllysine is present on residues K30, K46, and K60. Position 98 is an N6-acetyllysine; alternate (K98). N6-succinyllysine; alternate is present on K98.

The protein belongs to the complex I NDUFA5 subunit family. As to quaternary structure, complex I is composed of 45 different subunits.

Its subcellular location is the mitochondrion inner membrane. Functionally, accessory subunit of the mitochondrial membrane respiratory chain NADH dehydrogenase (Complex I), that is believed not to be involved in catalysis. Complex I functions in the transfer of electrons from NADH to the respiratory chain. The immediate electron acceptor for the enzyme is believed to be ubiquinone. The sequence is that of NADH dehydrogenase [ubiquinone] 1 alpha subcomplex subunit 5 (NDUFA5) from Gorilla gorilla gorilla (Western lowland gorilla).